We begin with the raw amino-acid sequence, 538 residues long: Sucrose transport protein SUT1 (538 aa).

Residues 1–52 lie on the Cytoplasmic side of the membrane; it reads MARGSGAGGGGGGGGGGLELSVGVGGGGGARGGGGGEAAAAVETAAPISLGR. The chain crosses the membrane as a helical span at residues 53-73; the sequence is LILSGMVAGGVQYGWALQLSL. At 74 to 81 the chain is on the extracellular side; it reads LTPYVQTL. Residues 82 to 102 traverse the membrane as a helical segment; sequence GLSHALTSFMWLCGPIAGMVV. The Cytoplasmic portion of the chain corresponds to 103 to 123; sequence QPCVGLYSDRCTSKWGRRRPY. The chain crosses the membrane as a helical span at residues 124–144; the sequence is ILTGCVLICLAVVVIGFSADI. Topologically, residues 145–162 are extracellular; that stretch reads GYAMGDTKEDCSVYHGSR. A helical membrane pass occupies residues 163 to 183; it reads WHAAIVYVLGFWLLDFSNNTV. Residues 184-198 are Cytoplasmic-facing; that stretch reads QGPARALMADLSGRH. Residues 199 to 219 form a helical membrane-spanning segment; it reads GPGTANSIFCSWMAMGNILGY. Topologically, residues 220-247 are extracellular; that stretch reads SSGSTNNWHKWFPFLKTRACCEACANLK. The helical transmembrane segment at 248-268 threads the bilayer; the sequence is GAFLVAVIFLSLCLVITLIFA. At 269–306 the chain is on the cytoplasmic side; sequence KEVPFKGNAALPTKSNEPAEPEGTGPLAVLKGFRNLPT. A helical membrane pass occupies residues 307–327; that stretch reads GMPSVLIVTGLTWLSWFPFIL. Residues 328 to 357 are Extracellular-facing; the sequence is YDTDWMGREIYHGDPKGTDPQIEAFNQGVR. A helical membrane pass occupies residues 358-378; sequence AGAFGLLLNSIVLGFSSFLIE. Topologically, residues 379–388 are cytoplasmic; it reads PMCRKVGPRV. Residues 389 to 409 traverse the membrane as a helical segment; it reads VWVTSNFLVCIAMAATALISF. The Extracellular portion of the chain corresponds to 410 to 433; the sequence is WSLKDFHGTVQKAITADKSIKAVC. A helical transmembrane segment spans residues 434–454; it reads LVLFAFLGVPLAVLYSVPFAV. Over 455-470 the chain is Cytoplasmic; it reads TAQLAATRGGGQGLCT. The chain crosses the membrane as a helical span at residues 471–491; the sequence is GVLNISIVIPQVVIALGAGPW. Over 492–499 the chain is Extracellular; that stretch reads DELFGKGN. A helical transmembrane segment spans residues 500–520; the sequence is IPAFGLASGFALIGGVAGIFL. At 521-538 the chain is on the cytoplasmic side; that stretch reads LPKISKRQFRSVSMGGGH.

This sequence belongs to the glycoside-pentoside-hexuronide (GPH) cation symporter transporter (TC 2.A.2.4) family. As to quaternary structure, homodimer.

It is found in the cell membrane. The protein operates within glycan biosynthesis; sucrose metabolism. Functionally, responsible for the transport of sucrose into the cell, with the concomitant uptake of protons (symport system). May also transport other glucosides. May be required for apoplastic phloem sucrose loading in source tissues (e.g. leaves) in order to transport it to sink tissues (e.g. roots, flowers). The protein is Sucrose transport protein SUT1 (SUT1) of Oryza sativa subsp. indica (Rice).